The primary structure comprises 241 residues: MLRQARPLVVLIAVTFLVASEVFSMALASDQNSNVASITSQVQRLLRTHHATIKVNADSEERFLTEPPLTTDEMMAMMKAGKSKNAYAFELGIAGQMADFINSGLPDIETFKKTPEFQKYEFYMNFLNDMRKDDDYKPLVEMIKKNKGETEAFKTLLVKVEDSVSKKKASPSAIVKLDPLNREQAIVEKIELALKKNQALNKNKASLETIEHTVRMAAKSKPSTWKIFKIISRLKKLKLKR.

Residues 1 to 20 (MLRQARPLVVLIAVTFLVAS) form the signal peptide. Residues 44-62 (RLLRTHHATIKVNADSEER) carry the RxLR-dEER motif.

It belongs to the RxLR effector family.

It is found in the secreted. It localises to the host cell membrane. Its function is as follows. Effector that suppresses flg22-induced post-translational MAP kinase activation in tomato but not in Arabidopsis. The perception of highly conserved pathogen- or microbe-associated molecular patterns (PAMPs/MAMPs), such as flg22, triggers converging signaling pathways recruiting MAP kinase cascades and inducing transcriptional re-programming, yielding a generic antimicrobial response. The protein is RxLR effector protein SFI5 of Phytophthora infestans (strain T30-4) (Potato late blight agent).